Reading from the N-terminus, the 331-residue chain is 6-phosphogluconolactonase (331 aa).

It belongs to the cycloisomerase 2 family.

The enzyme catalyses 6-phospho-D-glucono-1,5-lactone + H2O = 6-phospho-D-gluconate + H(+). Its pathway is carbohydrate degradation; pentose phosphate pathway; D-ribulose 5-phosphate from D-glucose 6-phosphate (oxidative stage): step 2/3. Its function is as follows. Catalyzes the hydrolysis of 6-phosphogluconolactone to 6-phosphogluconate. The protein is 6-phosphogluconolactonase of Salmonella agona (strain SL483).